A 521-amino-acid polypeptide reads, in one-letter code: tRNA (adenine(58)-N(1))-methyltransferase non-catalytic subunit trm6 (521 aa).

3 disordered regions span residues 1–24 (METE…NNNN), 305–336 (IYDK…AKTI), and 452–521 (QKST…KIDE). Residues 12–24 (KSTTSNTNDNNNN) are compositionally biased toward low complexity. The segment covering 308–334 (KQVKEKEKEKEKDENVKDEKESGEEAK) has biased composition (basic and acidic residues). Composition is skewed to low complexity over residues 452-476 (QKST…TKTT) and 487-502 (DATT…AATT). Basic and acidic residues predominate over residues 510-521 (SESALKKRKIDE).

This sequence belongs to the TRM6/GCD10 family. In terms of assembly, heterotetramer; composed of two copies of trmt6 and two copies of trmt61a.

The protein resides in the nucleus. Functionally, substrate-binding subunit of tRNA (adenine-N(1)-)-methyltransferase, which catalyzes the formation of N(1)-methyladenine at position 58 (m1A58) in initiator methionyl-tRNA. This Dictyostelium discoideum (Social amoeba) protein is tRNA (adenine(58)-N(1))-methyltransferase non-catalytic subunit trm6 (trmt6).